The sequence spans 416 residues: Bifunctional protein GlmU (416 aa).

Positions 1–229 (MTNYAIILAA…FNESLGVNDR (229 aa)) are pyrophosphorylase. UDP-N-acetyl-alpha-D-glucosamine is bound by residues 8–11 (LAAG), Lys22, Gln72, and 77–78 (GT). A Mg(2+)-binding site is contributed by Asp102. Residues Gly139, Glu154, Asn169, and Asn227 each coordinate UDP-N-acetyl-alpha-D-glucosamine. Position 227 (Asn227) interacts with Mg(2+). The segment at 230-250 (VALATAETVMRQRITQKHMVN) is linker. Residues 251–416 (GVTFQNPETV…DSHCTFGSWR (166 aa)) form an N-acetyltransferase region. UDP-N-acetyl-alpha-D-glucosamine-binding residues include Arg332 and Lys350. Catalysis depends on His362, which acts as the Proton acceptor. Residues Tyr365 and Asn376 each coordinate UDP-N-acetyl-alpha-D-glucosamine. Acetyl-CoA contacts are provided by residues Ala379 and 385–386 (NY).

The protein in the N-terminal section; belongs to the N-acetylglucosamine-1-phosphate uridyltransferase family. It in the C-terminal section; belongs to the transferase hexapeptide repeat family. In terms of assembly, homotrimer. The cofactor is Mg(2+).

Its subcellular location is the cytoplasm. It catalyses the reaction alpha-D-glucosamine 1-phosphate + acetyl-CoA = N-acetyl-alpha-D-glucosamine 1-phosphate + CoA + H(+). The enzyme catalyses N-acetyl-alpha-D-glucosamine 1-phosphate + UTP + H(+) = UDP-N-acetyl-alpha-D-glucosamine + diphosphate. It participates in nucleotide-sugar biosynthesis; UDP-N-acetyl-alpha-D-glucosamine biosynthesis; N-acetyl-alpha-D-glucosamine 1-phosphate from alpha-D-glucosamine 6-phosphate (route II): step 2/2. Its pathway is nucleotide-sugar biosynthesis; UDP-N-acetyl-alpha-D-glucosamine biosynthesis; UDP-N-acetyl-alpha-D-glucosamine from N-acetyl-alpha-D-glucosamine 1-phosphate: step 1/1. The protein operates within bacterial outer membrane biogenesis; LPS lipid A biosynthesis. Its function is as follows. Catalyzes the last two sequential reactions in the de novo biosynthetic pathway for UDP-N-acetylglucosamine (UDP-GlcNAc). The C-terminal domain catalyzes the transfer of acetyl group from acetyl coenzyme A to glucosamine-1-phosphate (GlcN-1-P) to produce N-acetylglucosamine-1-phosphate (GlcNAc-1-P), which is converted into UDP-GlcNAc by the transfer of uridine 5-monophosphate (from uridine 5-triphosphate), a reaction catalyzed by the N-terminal domain. This Streptococcus pyogenes serotype M12 (strain MGAS2096) protein is Bifunctional protein GlmU.